Reading from the N-terminus, the 272-residue chain is Ribosomal RNA small subunit methyltransferase J (272 aa).

S-adenosyl-L-methionine is bound by residues 120–121, 136–137, 171–172, and D188; these read RD, ER, and SS.

Belongs to the methyltransferase superfamily. RsmJ family.

The protein resides in the cytoplasm. The enzyme catalyses guanosine(1516) in 16S rRNA + S-adenosyl-L-methionine = N(2)-methylguanosine(1516) in 16S rRNA + S-adenosyl-L-homocysteine + H(+). Specifically methylates the guanosine in position 1516 of 16S rRNA. In Colwellia psychrerythraea (strain 34H / ATCC BAA-681) (Vibrio psychroerythus), this protein is Ribosomal RNA small subunit methyltransferase J.